A 229-amino-acid chain; its full sequence is NAD-dependent protein deacetylase (229 aa).

One can recognise a Deacetylase sirtuin-type domain in the interval 1–229 (MNKLNEALKK…SDAVKVFEEI (229 aa)). NAD(+) contacts are provided by Ala20, Arg32, Gln96, Ile98, Asp99, His114, Thr181, Ser182, Asn205, and Val223. 2 residues coordinate nicotinamide: Ile98 and Asp99. The active-site Proton acceptor is His114.

The protein belongs to the sirtuin family. Class U subfamily.

Its subcellular location is the cytoplasm. It carries out the reaction N(6)-acetyl-L-lysyl-[protein] + NAD(+) + H2O = 2''-O-acetyl-ADP-D-ribose + nicotinamide + L-lysyl-[protein]. Functionally, NAD-dependent protein deacetylase which modulates the activities of several enzymes which are inactive in their acetylated form. In Listeria monocytogenes serovar 1/2a (strain ATCC BAA-679 / EGD-e), this protein is NAD-dependent protein deacetylase.